The following is a 333-amino-acid chain: MDIANLIQNLKQTLQNASNERHLIELKNIFVKQHLLPLYDELKKSDNKKEMGLLINEFKQQIELITNQALVELNNKSDQIDLKKWANKTLFTPFIKNGHHHIINNIIDDIAQFFKKLNFEIVSGPEVVSPVYNFDHLNIDENHPARATADSFFINSVQMLRTHCTTTTAQVLENNPHKDIRIMSFGNVYRKDDDDATHSHQFNQVDFVWVKEGLTVANLKWLIDSLIKYLFGQNLKTRYRLSFFPFTEPSFEVDVQCFKCDLKGCAVCKKSTWIEIMGTGMLHENVLKAANINDIKTGMAFGVGIDRIAMLKYEIDDIRYLYSNNFKFNAQIK.

A Mg(2+)-binding site is contributed by Glu-248.

Belongs to the class-II aminoacyl-tRNA synthetase family. Phe-tRNA synthetase alpha subunit type 1 subfamily. Tetramer of two alpha and two beta subunits. It depends on Mg(2+) as a cofactor.

It localises to the cytoplasm. It carries out the reaction tRNA(Phe) + L-phenylalanine + ATP = L-phenylalanyl-tRNA(Phe) + AMP + diphosphate + H(+). The chain is Phenylalanine--tRNA ligase alpha subunit from Ureaplasma urealyticum serovar 10 (strain ATCC 33699 / Western).